The primary structure comprises 336 residues: Heme A synthase (336 aa).

Helical transmembrane passes span 12 to 32 (LKLWLITLFSLIVLMVAVGGL), 97 to 117 (LLARFVGLFTLVPLLFFTLYF), 130 to 150 (IFFLVCLQGFIGWYMVSSGLI), 161 to 181 (SIHLSLALFILCLIFWYILDI), 194 to 214 (LFLLFILKLIVLQIVLGAFLS), 256 to 276 (FLHRSTAYLLLFFIIILNFIY), 285 to 305 (YVLFFDVAILFQIFLGIITLI), and 310 to 330 (ITYASLHQLGSILVLSSYFLI). H258 contributes to the heme binding site. A heme-binding site is contributed by H316.

This sequence belongs to the COX15/CtaA family. Type 2 subfamily. In terms of assembly, interacts with CtaB. The cofactor is heme b.

The protein resides in the cell membrane. It carries out the reaction Fe(II)-heme o + 2 A + H2O = Fe(II)-heme a + 2 AH2. Its pathway is porphyrin-containing compound metabolism; heme A biosynthesis; heme A from heme O: step 1/1. Catalyzes the conversion of heme O to heme A by two successive hydroxylations of the methyl group at C8. The first hydroxylation forms heme I, the second hydroxylation results in an unstable dihydroxymethyl group, which spontaneously dehydrates, resulting in the formyl group of heme A. This chain is Heme A synthase, found in Pelagibacter ubique (strain HTCC1062).